The chain runs to 461 residues: Xyloglucan 6-xylosyltransferase 2 (461 aa).

Residues 1-20 (MIERCLGAYRCRRIQRALRQ) lie on the Cytoplasmic side of the membrane. Residues 21–40 (LKVTILCLLLTVVVLRSTIG) form a helical; Signal-anchor for type II membrane protein membrane-spanning segment. The Lumenal portion of the chain corresponds to 41–461 (AGKFGTPEQD…KAVKVQTNQV (421 aa)). The segment at 74–95 (QTGGDSSSGDGGGNSGGSNNYE) is disordered. Residue Asn-432 is glycosylated (N-linked (GlcNAc...) asparagine).

This sequence belongs to the glycosyltransferase 34 family. Homodimer. Interacts with XXT1 and XXT5. Interacts with FUT1 and XLT2.

It localises to the golgi apparatus membrane. The catalysed reaction is Transfers an alpha-D-xylosyl residue from UDP-D-xylose to a glucose residue in xyloglucan, forming an alpha-(1-&gt;6)-D-xylosyl-D-glucose linkage.. Its function is as follows. Xylosyltransferase specific to UDP-D-xylose that accepts both cellopentaose and cellohexaose as substrates, with a better use of cellohexaose, to produce xyloglucan. Adds preferentially the first xylosyl residue to the fourth glucosyl residue from the reducing end of both acceptors. Transfer one xylose mainly to the second glucose residue from the non-reducing end. The acceptor should have a minimum of four glucose residues. Associates with other xyloglucan-synthesizing enzymes to form multiprotein complexes for xyloglucan synthesis in the Golgi. This is Xyloglucan 6-xylosyltransferase 2 (XXT2) from Arabidopsis thaliana (Mouse-ear cress).